The sequence spans 353 residues: Photosystem II protein D1 (353 aa).

Position 2 is an N-acetylthreonine (Thr-2). Phosphothreonine is present on Thr-2. Transmembrane regions (helical) follow at residues 29–46 (YIGWFGVLMIPTLLTATS), 118–133 (HFLLGVACYMGREWEL), and 142–156 (WIAVAYSAPVAAATA). Residue His-118 coordinates chlorophyll a. Tyr-126 is a binding site for pheophytin a. Residues Asp-170 and Glu-189 each coordinate [CaMn4O5] cluster. Residues 197-218 (FHMLGVAGVFGGSLFSAMHGSL) traverse the membrane as a helical segment. A chlorophyll a-binding site is contributed by His-198. An a quinone-binding site is contributed by His-215. His-215 and His-272 together coordinate Fe cation. Residues 274 to 288 (FLAAWPVVGIWFTAL) form a helical membrane-spanning segment. Positions 332, 333, 342, and 344 each coordinate [CaMn4O5] cluster. Positions 345–353 (AVEAPSING) are excised as a propeptide.

This sequence belongs to the reaction center PufL/M/PsbA/D family. In terms of assembly, PSII is composed of 1 copy each of membrane proteins PsbA, PsbB, PsbC, PsbD, PsbE, PsbF, PsbH, PsbI, PsbJ, PsbK, PsbL, PsbM, PsbT, PsbX, PsbY, PsbZ, Psb30/Ycf12, at least 3 peripheral proteins of the oxygen-evolving complex and a large number of cofactors. It forms dimeric complexes. It depends on The D1/D2 heterodimer binds P680, chlorophylls that are the primary electron donor of PSII, and subsequent electron acceptors. It shares a non-heme iron and each subunit binds pheophytin, quinone, additional chlorophylls, carotenoids and lipids. D1 provides most of the ligands for the Mn4-Ca-O5 cluster of the oxygen-evolving complex (OEC). There is also a Cl(-1) ion associated with D1 and D2, which is required for oxygen evolution. The PSII complex binds additional chlorophylls, carotenoids and specific lipids. as a cofactor. Post-translationally, tyr-161 forms a radical intermediate that is referred to as redox-active TyrZ, YZ or Y-Z. In terms of processing, C-terminally processed by CTPA; processing is essential to allow assembly of the oxygen-evolving complex and thus photosynthetic growth.

The protein localises to the plastid. Its subcellular location is the chloroplast thylakoid membrane. It catalyses the reaction 2 a plastoquinone + 4 hnu + 2 H2O = 2 a plastoquinol + O2. Photosystem II (PSII) is a light-driven water:plastoquinone oxidoreductase that uses light energy to abstract electrons from H(2)O, generating O(2) and a proton gradient subsequently used for ATP formation. It consists of a core antenna complex that captures photons, and an electron transfer chain that converts photonic excitation into a charge separation. The D1/D2 (PsbA/PsbD) reaction center heterodimer binds P680, the primary electron donor of PSII as well as several subsequent electron acceptors. In Brassica napus (Rape), this protein is Photosystem II protein D1.